Here is a 448-residue protein sequence, read N- to C-terminus: Ribosomal protein uS12 methylthiotransferase RimO (448 aa).

Positions 16–126 constitute an MTTase N-terminal domain; it reads PRISFVSLGC…VVAAVHEAVP (111 aa). The [4Fe-4S] cluster site is built by Cys25, Cys61, Cys90, Cys157, Cys161, and Cys164. The region spanning 143–380 is the Radical SAM core domain; that stretch reads LTPRHYAYLK…MEAQSHVSLR (238 aa). In terms of domain architecture, TRAM spans 383–448; it reads RAKVGKRLSV…DAYDLHGIAV (66 aa).

Belongs to the methylthiotransferase family. RimO subfamily. Requires [4Fe-4S] cluster as cofactor.

Its subcellular location is the cytoplasm. The catalysed reaction is L-aspartate(89)-[ribosomal protein uS12]-hydrogen + (sulfur carrier)-SH + AH2 + 2 S-adenosyl-L-methionine = 3-methylsulfanyl-L-aspartate(89)-[ribosomal protein uS12]-hydrogen + (sulfur carrier)-H + 5'-deoxyadenosine + L-methionine + A + S-adenosyl-L-homocysteine + 2 H(+). In terms of biological role, catalyzes the methylthiolation of an aspartic acid residue of ribosomal protein uS12. This Methylorubrum extorquens (strain PA1) (Methylobacterium extorquens) protein is Ribosomal protein uS12 methylthiotransferase RimO.